The sequence spans 279 residues: Large ribosomal subunit protein uL2 (279 aa).

Disordered regions lie at residues 34–58 (LRPL…GGGH) and 225–279 (VMNP…KNKR). Residues 251-268 (GKPEGRTRRPNKESDKLI) show a composition bias toward basic and acidic residues. Positions 269–279 (VRRRRTGKNKR) are enriched in basic residues.

This sequence belongs to the universal ribosomal protein uL2 family. Part of the 50S ribosomal subunit. Forms a bridge to the 30S subunit in the 70S ribosome.

Functionally, one of the primary rRNA binding proteins. Required for association of the 30S and 50S subunits to form the 70S ribosome, for tRNA binding and peptide bond formation. It has been suggested to have peptidyltransferase activity; this is somewhat controversial. Makes several contacts with the 16S rRNA in the 70S ribosome. This Micrococcus luteus (strain ATCC 4698 / DSM 20030 / JCM 1464 / CCM 169 / CCUG 5858 / IAM 1056 / NBRC 3333 / NCIMB 9278 / NCTC 2665 / VKM Ac-2230) (Micrococcus lysodeikticus) protein is Large ribosomal subunit protein uL2.